The chain runs to 255 residues: FMR1 neighbor protein (255 aa).

Over 1–68 (MSSHRRKAKG…ESLKMRVSKP (68 aa)) the chain is Cytoplasmic. Residues 69–89 (FGMLMLSIWILLFVCYYLSYY) form a helical membrane-spanning segment. The Extracellular portion of the chain corresponds to 90–183 (LCSGSSYFVL…FAPFRDVPKQ (94 aa)). The P-type domain occupies 125–184 (LLNFFFPTTCNLRENQVAKPCNELQDLSESECLRHKCCFSSSGTTSFKCFAPFRDVPKQM). Residues 184-204 (MMQMFGLGAISLILVCLPIYC) traverse the membrane as a helical segment. Topologically, residues 205–255 (RSLFWRSEPADDLQRQDNRVVTGLKKQRRKRKRKSEMLQKAARGREEHGDE) are cytoplasmic. The segment at 220–255 (QDNRVVTGLKKQRRKRKRKSEMLQKAARGREEHGDE) is disordered. Basic residues predominate over residues 229–238 (KKQRRKRKRK).

Testis-specific. Expressed in melanoma, sarcoma, lung, breast, bladder, esophageal and ovarian cancers.

It is found in the membrane. This chain is FMR1 neighbor protein, found in Homo sapiens (Human).